The following is a 266-amino-acid chain: Lectin 7 (266 aa).

The N-terminal stretch at 1–27 (MAINTSRTQILFITIISFLILAQNVNS) is a signal peptide. N-linked (GlcNAc...) asparagine glycans are attached at residues Asn121, Asn205, and Asn219.

Belongs to the leguminous lectin family.

Its function is as follows. May be involved in arbuscular mycorrhizal (AM) symbiosis with AM fungi. The chain is Lectin 7 from Medicago truncatula (Barrel medic).